The primary structure comprises 545 residues: MLLLHRAVVLRLQQACRLKSIPSRICIQACSTNDSFQPQRPSLTFSGDNSSTQGWRVMGTLLGLGAVLAYQDHRCRAAQESTHIYTKEEVSSHTSPETGIWVTLGSEVFDVTEFVDLHPGGPSKLMLAAGGPLEPFWALYAVHNQSHVRELLAQYKIGELNPEDKVAPTVETSDPYADDPVRHPALKVNSQRPFNAEPPPELLTENYITPNPIFFTRNHLPVPNLDPDTYRLHVVGAPGGQSLSLSLDDLHNFPRYEITVTLQCAGNRRSEMTQVKEVKGLEWRTGAISTARWAGARLCDVLAQAGHQLCETEAHVCFEGLDSDPTGTAYGASIPLARAMDPEAEVLLAYEMNGQPLPRDHGFPVRVVVPGVVGARHVKWLGRVSVQPEESYSHWQRRDYKGFSPSVDWETVDFDSAPSIQELPVQSAITEPRDGETVESGEVTIKGYAWSGGGRAVIRVDVSLDGGLTWQVAKLDGEEQRPRKAWAWRLWQLKAPVPAGQKELNIVCKAVDDGYNVQPDTVAPIWNLRGVLSNAWHRVHVYVSP.

Residues 1–79 (MLLLHRAVVL…YQDHRCRAAQ (79 aa)) constitute a mitochondrion transit peptide. Positions 82–161 (THIYTKEEVS…LAQYKIGELN (80 aa)) constitute a Cytochrome b5 heme-binding domain. Residue His-118 coordinates heme b. Ser-123 bears the Phosphoserine mark. The heme b site is built by His-143, Gln-145, and His-147. The interval 165–174 (KVAPTVETSD) is hinge. The segment at 175–401 (PYADDPVRHP…YSHWQRRDYK (227 aa)) is moco domain. Mo-molybdopterin-binding positions include 215–219 (FTRNH), Cys-264, Asp-322, His-361, Arg-366, and 377–379 (HVK). The interval 402–538 (GFSPSVDWET…RGVLSNAWHR (137 aa)) is homodimerization.

In terms of assembly, homodimer. Requires heme b as cofactor. Mo-molybdopterin is required as a cofactor.

It localises to the mitochondrion intermembrane space. The catalysed reaction is sulfite + O2 + H2O = sulfate + H2O2. It participates in energy metabolism; sulfur metabolism. Catalyzes the oxidation of sulfite to sulfate, the terminal reaction in the oxidative degradation of sulfur-containing amino acids. The polypeptide is Sulfite oxidase, mitochondrial (SUOX) (Homo sapiens (Human)).